Reading from the N-terminus, the 450-residue chain is Glucose-6-phosphate isomerase (450 aa).

The active-site Proton donor is E290. Residues H311 and K425 contribute to the active site.

The protein belongs to the GPI family.

It localises to the cytoplasm. The catalysed reaction is alpha-D-glucose 6-phosphate = beta-D-fructose 6-phosphate. Its pathway is carbohydrate biosynthesis; gluconeogenesis. It functions in the pathway carbohydrate degradation; glycolysis; D-glyceraldehyde 3-phosphate and glycerone phosphate from D-glucose: step 2/4. Its function is as follows. Catalyzes the reversible isomerization of glucose-6-phosphate to fructose-6-phosphate. The chain is Glucose-6-phosphate isomerase from Lactiplantibacillus plantarum (strain ATCC BAA-793 / NCIMB 8826 / WCFS1) (Lactobacillus plantarum).